The primary structure comprises 464 residues: L-cystine uptake protein TcyP (464 aa).

10 helical membrane passes run 3–23, 34–54, 73–93, 107–127, 184–204, 225–245, 263–283, 347–367, 371–391, and 395–415; these read TLLV…LYYM, VFTA…IYEP, YVKL…ISAF, GLII…GIAA, PTST…FIGV, IVMR…LALM, FVLA…LLIA, AGIY…IDPL, FILT…GVGG, and FAAL…ALVI.

It belongs to the dicarboxylate/amino acid:cation symporter (DAACS) (TC 2.A.23) family.

It is found in the membrane. Its function is as follows. Mediates uptake of L-cystine, the oxidized form of L-cysteine. This Bacillus cereus (strain ATCC 10987 / NRS 248) protein is L-cystine uptake protein TcyP.